Here is a 249-residue protein sequence, read N- to C-terminus: Triosephosphate isomerase (249 aa).

Residues N12 and K14 each contribute to the substrate site. K14 carries the N6-acetyllysine modification. Y68 bears the 3'-nitrotyrosine mark. A Phosphoserine modification is found at S80. The active-site Electrophile is the H96. S106 is subject to Phosphoserine. Residue K142 forms a Glycyl lysine isopeptide (Lys-Gly) (interchain with G-Cter in SUMO1) linkage. Position 149 is an N6-succinyllysine (K149). K156 bears the N6-acetyllysine; alternate mark. K156 is modified (N6-succinyllysine; alternate). At S159 the chain carries Phosphoserine. E166 serves as the catalytic Proton acceptor. At T173 the chain carries Phosphothreonine. K194 carries the N6-acetyllysine; alternate modification. An N6-succinyllysine; alternate modification is found at K194. At K194 the chain carries N6-methyllysine; alternate. S198 bears the Phosphoserine mark. Residue Y209 is modified to 3'-nitrotyrosine. S212 is subject to Phosphoserine. At T214 the chain carries Phosphothreonine. Residue S223 is modified to Phosphoserine. Position 238 is an N6-acetyllysine (K238).

This sequence belongs to the triosephosphate isomerase family. Homodimer.

It is found in the cytoplasm. The catalysed reaction is dihydroxyacetone phosphate = methylglyoxal + phosphate. It catalyses the reaction D-glyceraldehyde 3-phosphate = dihydroxyacetone phosphate. It functions in the pathway carbohydrate degradation; glycolysis; D-glyceraldehyde 3-phosphate from glycerone phosphate: step 1/1. It participates in carbohydrate biosynthesis; gluconeogenesis. Functionally, triosephosphate isomerase is an extremely efficient metabolic enzyme that catalyzes the interconversion between dihydroxyacetone phosphate (DHAP) and D-glyceraldehyde-3-phosphate (G3P) in glycolysis and gluconeogenesis. In terms of biological role, it is also responsible for the non-negligible production of methylglyoxal a reactive cytotoxic side-product that modifies and can alter proteins, DNA and lipids. This chain is Triosephosphate isomerase (TPI1), found in Macaca fascicularis (Crab-eating macaque).